Reading from the N-terminus, the 254-residue chain is UPF0246 protein Fphi_1075 (254 aa).

The protein belongs to the UPF0246 family.

This Francisella philomiragia subsp. philomiragia (strain ATCC 25017 / CCUG 19701 / FSC 153 / O#319-036) protein is UPF0246 protein Fphi_1075.